Here is a 451-residue protein sequence, read N- to C-terminus: UDP-N-acetylmuramate--L-alanine ligase (451 aa).

110-116 (GTHGKTT) is a binding site for ATP.

Belongs to the MurCDEF family.

The protein resides in the cytoplasm. The catalysed reaction is UDP-N-acetyl-alpha-D-muramate + L-alanine + ATP = UDP-N-acetyl-alpha-D-muramoyl-L-alanine + ADP + phosphate + H(+). It functions in the pathway cell wall biogenesis; peptidoglycan biosynthesis. Functionally, cell wall formation. This is UDP-N-acetylmuramate--L-alanine ligase from Francisella tularensis subsp. tularensis (strain WY96-3418).